The sequence spans 1370 residues: Histidine kinase P4 (1370 aa).

The signal sequence occupies residues 1-20 (MRNIGVFSVILFSFLAISLK). Residues 799-819 (WAFCLYALCIGTALIALISFL) traverse the membrane as a helical segment. Residues 852-1072 (NISHEFRTPL…IFRVSLPLGR (221 aa)) form the Histidine kinase domain. A Phosphohistidine; by autocatalysis modification is found at histidine 855. The region spanning 1119–1234 (TILIVEDHKP…EFRLRIKNIL (116 aa)) is the Response regulatory domain. Aspartate 1167 carries the post-translational modification 4-aspartylphosphate. The region spanning 1266–1365 (KKAFKIVEDN…NETPSQYQNR (100 aa)) is the HTH araC/xylS-type domain. 2 consecutive DNA-binding regions (H-T-H motif) follow at residues 1284–1305 (LAFS…KAWT) and 1332–1355 (ISQI…QKKF).

In terms of processing, autophosphorylated. Activation requires a sequential transfer of a phosphate group from a His in the primary transmitter domain, to an Asp in the receiver domain and to a His in the secondary transmitter domain.

It is found in the membrane. The protein localises to the cell surface. It catalyses the reaction ATP + protein L-histidine = ADP + protein N-phospho-L-histidine.. In terms of biological role, histidine kinase probably involved in ulvan degradation. Ulvan is the main polysaccharide component of the Ulvales (green seaweed) cell wall. It is composed of disaccharide building blocks comprising 3-sulfated rhamnose (Rha3S) linked to D-glucuronic acid (GlcA), L-iduronic acid (IduA), or D-xylose (Xyl). This Formosa agariphila (strain DSM 15362 / KCTC 12365 / LMG 23005 / KMM 3901 / M-2Alg 35-1) protein is Histidine kinase P4.